Here is a 346-residue protein sequence, read N- to C-terminus: Enkurin domain-containing protein 1 (346 aa).

A disordered region spans residues 1 to 35; that stretch reads MCEGPSRISGPIPPDPTLCPDNYRRPTSAQGRLEG. At Ser91 the chain carries Phosphoserine. The segment at 91–171 is required for binding to microtubules; the sequence is SLKRKDPKDH…AHFLRAHSRC (81 aa). A compositionally biased stretch (basic and acidic residues) spans 114–125; that stretch reads RFREQERSREQG. Disordered stretches follow at residues 114–137, 167–197, and 260–280; these read RFRE…WRSP, AHSR…EPGL, and AEAR…TRMP. Phosphoserine is present on Ser136. Over residues 174-190 the composition is skewed to pro residues; that stretch reads GLPPPHVSSPQPTPPGP. Residues 251–343 enclose the Enkurin domain; the sequence is ERRDLWRREA…IFSRPKVFVK (93 aa).

As to quaternary structure, interacts with alpha-tubulin. Interacts (via central region) with CCP110 (via N-terminal region); competes with CEP97 for binding to CCP110.

It is found in the cytoplasm. The protein localises to the cytoskeleton. It localises to the microtubule organizing center. The protein resides in the centrosome. Its subcellular location is the centriole. It is found in the cilium basal body. The protein localises to the cell projection. It localises to the cilium. The protein resides in the spindle. Its subcellular location is the spindle pole. It is found in the cilium axoneme. Functionally, microtubule-binding protein which regulates microtubule organization and stability. Promotes the stability of astral microtubules and facilitates the proper orientation of the mitotic spindle. This allows the oriented division of basal keratinocytes and contributes to epidermal stratification. Required for the assembly of both primary and motile cilia. Destabilizes the interaction between CCP110 and CEP97 by competing with CEP97 for binding to CCP110 which promotes the removal of CCP110 and CEP97 from the mother centriole and allows the initiation of ciliogenesis. The chain is Enkurin domain-containing protein 1 (ENKD1) from Homo sapiens (Human).